We begin with the raw amino-acid sequence, 46 residues long: Myoregulin (46 aa).

Residues 1–21 (MSGKSWVLISTTSPQSLEDEI) are Cytoplasmic-facing. Residues 22 to 42 (LGRLLKILFVLFVDLMSIMYV) traverse the membrane as a helical segment. Topologically, residues 43-46 (VITS) are lumenal.

In terms of assembly, homooligomer. Monomer. Interacts with ATP2A1/SERCA1. Interacts as a monomer with ATP2A2/SERCA2; the interaction inhibits ATP2A2 activity. In terms of tissue distribution, specifically expressed in all skeletal muscles. Detected in both fast- and slow-type skeletal muscle. Not expressed in cardiac or smooth muscles.

It localises to the sarcoplasmic reticulum membrane. Functionally, inhibits the activity of ATP2A1/SERCA1 ATPase in sarcoplasmic reticulum by decreasing the apparent affinity of the ATPase for Ca(2+), thereby acting as a key regulator of skeletal muscle activity. Its high expression in adult skeletal muscle, suggests that it constitutes the predominant regulator of ATP2A1/SERCA1 in adult skeletal muscle. Also inhibits the activity of ATP2A2/SERCA2 and ATP2A3/SERCA3. This chain is Myoregulin, found in Mus musculus (Mouse).